A 191-amino-acid polypeptide reads, in one-letter code: Ribosomal RNA small subunit methyltransferase G (191 aa).

S-adenosyl-L-methionine-binding positions include Gly-59, 111–112, and Arg-124; that span reads IE.

This sequence belongs to the methyltransferase superfamily. RNA methyltransferase RsmG family.

The protein resides in the cytoplasm. Functionally, specifically methylates the N7 position of a guanine in 16S rRNA. The protein is Ribosomal RNA small subunit methyltransferase G of Mycoplasma pneumoniae (strain ATCC 29342 / M129 / Subtype 1) (Mycoplasmoides pneumoniae).